A 742-amino-acid chain; its full sequence is MATKFPSFNQGLAQDPTTRRIWYGIATAHDFESHDGMTEEKLYQKLFSTHFGHLAIIALWVAGNLFHIAWQGNFEQFVLDPTHVRPIAHAIWDPHFGSGITEAMTQAGASGPVNIAYSGLYHWWYTIGMRTNEQLFQASIFMSILACWTLFAGWLHLQPKFRPSLAWFKNAESRLNHHLAVLFGFSSIAWTGHLVHVAIPESRGQHVGWDNWLTVLPHPAGLAPFFTLNWGAYAQNPDSLDQVFGTAEGAGTAIFTFLGGLHPQSEALWLTDIAHHHIAIGTVFVIAGHMYRNTFGIGHSLKEITEAHNTRHPNDPHKGSFGINHDGIYETVNNSLHFQLGLALASLGVATSLVAQHMGALPSYAFIARDYTTQSALYSHHQYIAMFLMVGAFAHGAIFFVRDYDPELNKDNVLARVLGTKEALISHLSWVTMLLGFHTLGIYVHNDVVVAFGNPEKQILIEPVFAQFVQAAQGKMMYGFNALLSDPTSSASLAANSLPGNHYWMDLINRQDALSAFLPIGPADFLVHHAIALGLHTTALILIKGALDARGTKLIPDKKDLGYAFPCDGPGRGGTCDSSSWDAMYLAMFWALNLLAWVTFYWHWKHLAIWQGNVAQFNESGTYLMGWFRDYLWLNSAQLINGYNPFGVNSLSPWAWMFLFGHLVWATGFMFLISWRGYWQELIETLVWAHQRTPIANLVGWRDKPVALSIVQARLVGLAHFTIGNILTFGAFVIASTSGKFG.

8 helical membrane-spanning segments follow: residues 46–69 (LFST…FHIA), 135–158 (LFQA…LHLQ), 175–199 (LNHH…HVAI), 273–291 (IAHH…GHMY), 336–359 (LHFQ…QHMG), 375–401 (SALY…IFFV), 423–445 (ALIS…IYVH), and 525–543 (FLVH…LILI). [4Fe-4S] cluster contacts are provided by Cys567 and Cys576. Transmembrane regions (helical) follow at residues 583 to 604 (AMYL…YWHW) and 651 to 673 (LSPW…MFLI). The divinyl chlorophyll a site is built by His662, Met670, and Tyr678. Trp679 is a phylloquinone binding site. The chain crosses the membrane as a helical span at residues 715–735 (LVGLAHFTIGNILTFGAFVIA).

The protein belongs to the PsaA/PsaB family. In terms of assembly, the PsaA/B heterodimer binds the P700 divinyl chlorophyll special pair and subsequent electron acceptors. PSI consists of a core antenna complex that captures photons, and an electron transfer chain that converts photonic excitation into a charge separation. The cyanobacterial PSI reaction center is composed of one copy each of PsaA,B,C,D,E,F,I,J,K,L,M and X, and forms trimeric complexes. PSI electron transfer chain: 5 divinyl chlorophyll a, 1 divinyl chlorophyll a', 2 phylloquinones and 3 4Fe-4S clusters. PSI core antenna: 90 divinyl chlorophyll a, 22 carotenoids, 3 phospholipids and 1 galactolipid. P700 is a divinyl chlorophyll a/divinyl chlorophyll a' dimer, A0 is one or more divinyl chlorophyll a, A1 is one or both phylloquinones and FX is a shared 4Fe-4S iron-sulfur center. is required as a cofactor.

The protein localises to the cellular thylakoid membrane. The enzyme catalyses reduced [plastocyanin] + hnu + oxidized [2Fe-2S]-[ferredoxin] = oxidized [plastocyanin] + reduced [2Fe-2S]-[ferredoxin]. Functionally, psaA and PsaB bind P700, the primary electron donor of photosystem I (PSI), as well as the electron acceptors A0, A1 and FX. PSI is a plastocyanin/cytochrome c6-ferredoxin oxidoreductase, converting photonic excitation into a charge separation, which transfers an electron from the donor P700 chlorophyll pair to the spectroscopically characterized acceptors A0, A1, FX, FA and FB in turn. Oxidized P700 is reduced on the lumenal side of the thylakoid membrane by plastocyanin or cytochrome c6. The protein is Photosystem I P700 chlorophyll a apoprotein A2 of Prochlorococcus marinus (strain MIT 9301).